The sequence spans 232 residues: Sugar fermentation stimulation protein homolog (232 aa).

This sequence belongs to the SfsA family.

The protein is Sugar fermentation stimulation protein homolog of Brucella anthropi (strain ATCC 49188 / DSM 6882 / CCUG 24695 / JCM 21032 / LMG 3331 / NBRC 15819 / NCTC 12168 / Alc 37) (Ochrobactrum anthropi).